The chain runs to 522 residues: Target of rapamycin complex 2 subunit MAPKAP1 (522 aa).

Ala-2 carries the N-acetylalanine modification. An interaction with MAP3K2 region spans residues 2 to 184 (AFLDNPTIIL…KKIDVYLPLH (183 aa)). An interaction with NBN region spans residues 2–267 (AFLDNPTIIL…GFSTLALVEK (266 aa)). Thr-86 is modified (phosphothreonine). Phosphoserine is present on residues Ser-128, Ser-186, Ser-315, and Ser-356. Residues 139-267 (QSILSVRLEQ…GFSTLALVEK (129 aa)) enclose the CRIM domain. An SIN1-type RBD region spans residues 279–353 (LFVRINAAHG…QSAWEFCLVR (75 aa)). The SIN1-type PH domain occupies 382-487 (HYKSFKVSMI…IVLKVNYILE (106 aa)). A 1,2-diacyl-sn-glycero-3-phospho-(1D-myo-inositol-3,4,5-trisphosphate) is bound at residue Arg-393. Position 398 is a phosphothreonine (Thr-398). 2 residues coordinate a 1,2-diacyl-sn-glycero-3-phospho-(1D-myo-inositol-3,4,5-trisphosphate): Lys-428 and Lys-464. An interaction with ATF2 region spans residues 468-522 (FESDAATVNEIVLKVNYILESRASTARADYFAQKQRKLNRRTSFSFQKEKKSGQQ). Ser-510 carries the phosphoserine modification.

This sequence belongs to the SIN1 family. As to quaternary structure, component of the mechanistic target of rapamycin complex 2 (mTORC2), consisting in two heterotretramers composed of MTOR, MLST8, RICTOR and MAPKAP1/SIN1. The mTORC2 core complex associates with PRR5/PROTOR1 and/or PRR5L/PROTOR2. Contrary to mTORC1, mTORC2 does not bind to and is not sensitive to FKBP12-rapamycin. Interacts with MAP3K2. Interacts with ATF2. Interacts with MAPK8. Interacts with GTP-bound HRAS and KRAS; inhibiting their activity. Interacts with IFNAR2. Interacts with CCDC28B. In terms of assembly, interacts with NBN. Phosphorylation at Ser-128 by PKC promotes relocalization to the perinuclear region, where the mTORC2 complex specifically mediates phosphorylation of SGK1. Phosphorylated at Thr-86 by AKT1 or RPS6KB1 in the presence of growth factors; the effect of this phosphorylation is however unclear. According to two studies, phosphorylation at Thr-86 by AKT1 is part of a positive feedback loop that increases mTORC2 activation. According to another study, phosphorylation at Thr-86 and Thr-398 by RPS6KB1 promotes dissociation from the mTORC2 complex, leading to inhibit mTORC2 signaling. As to expression, ubiquitously expressed, with highest levels in heart and skeletal muscle.

The protein resides in the cell membrane. It localises to the endoplasmic reticulum membrane. It is found in the early endosome membrane. Its subcellular location is the late endosome membrane. The protein localises to the lysosome membrane. The protein resides in the golgi apparatus membrane. It localises to the mitochondrion outer membrane. It is found in the cytoplasm. Its subcellular location is the perinuclear region. The protein localises to the nucleus. The protein resides in the cytosol. With respect to regulation, phosphatidylinositol 3,4,5-trisphosphate (PI(3,4,5)P3) promotes MTOR activation by relieving MAPKAP1/SIN1-mediated inhibition of MTOR that takes place in absence of PI(3,4,5)P3. Component of the mechanistic target of rapamycin complex 2 (mTORC2), which transduces signals from growth factors to pathways involved in proliferation, cytoskeletal organization, lipogenesis and anabolic output. In response to growth factors, mTORC2 phosphorylates and activates AGC protein kinase family members, including AKT (AKT1, AKT2 and AKT3), PKC (PRKCA, PRKCB and PRKCE) and SGK1. In contrast to mTORC1, mTORC2 is nutrient-insensitive. Within the mTORC2 complex, MAPKAP1/SIN1 acts as a substrate adapter which recognizes and binds AGC protein kinase family members for phosphorylation by MTOR. mTORC2 plays a critical role in AKT1 activation by mediating phosphorylation of different sites depending on the context, such as 'Thr-450', 'Ser-473', 'Ser-477' or 'Thr-479', facilitating the phosphorylation of the activation loop of AKT1 on 'Thr-308' by PDPK1/PDK1 which is a prerequisite for full activation. mTORC2 catalyzes the phosphorylation of SGK1 at 'Ser-422' and of PRKCA on 'Ser-657'. The mTORC2 complex also phosphorylates various proteins involved in insulin signaling, such as FBXW8 and IGF2BP1. mTORC2 acts upstream of Rho GTPases to regulate the actin cytoskeleton, probably by activating one or more Rho-type guanine nucleotide exchange factors. mTORC2 promotes the serum-induced formation of stress-fibers or F-actin. MAPKAP1 inhibits MAP3K2 by preventing its dimerization and autophosphorylation. Inhibits HRAS and KRAS independently of mTORC2 complex. Enhances osmotic stress-induced phosphorylation of ATF2 and ATF2-mediated transcription. Involved in ciliogenesis, regulates cilia length through its interaction with CCDC28B independently of mTORC2 complex. In terms of biological role, in contrast to isoform 1, isoform 2 and isoform 6, isoform 4 is not a component of the a mTORC2 complex. The chain is Target of rapamycin complex 2 subunit MAPKAP1 from Homo sapiens (Human).